We begin with the raw amino-acid sequence, 188 residues long: Capsid protein (188 aa).

The protein belongs to the tymoviruses capsid protein family.

Its subcellular location is the virion. Functionally, self-assembles to form a T=3 icosahedral capsid composed of 180 copies of the capsid protein. The capsid encapsulates the single-stranded RNA genome. The sequence is that of Capsid protein from Solanum lycopersicum (Tomato).